The following is a 348-amino-acid chain: Peroxidase 40 (348 aa).

A signal peptide spans 1–21; the sequence is MKNLFNLFLMFFFAMPILSLS. N-linked (GlcNAc...) asparagine glycosylation occurs at Asn-26. Cystine bridges form between Cys-59–Cys-139, Cys-92–Cys-97, Cys-145–Cys-344, and Cys-224–Cys-256. Residue His-90 is the Proton acceptor of the active site. Asp-91, Val-94, Gly-96, Asp-98, and Ser-100 together coordinate Ca(2+). The disordered stretch occupies residues 170–189; the sequence is GRKDSRTASKQAATNGLPSP. The segment covering 177 to 189 has biased composition (polar residues); the sequence is ASKQAATNGLPSP. Pro-187 lines the substrate pocket. Asn-190 carries N-linked (GlcNAc...) asparagine glycosylation. His-217 contributes to the heme b binding site. Thr-218 contributes to the Ca(2+) binding site. Asp-269, Thr-272, and Asp-277 together coordinate Ca(2+).

It belongs to the peroxidase family. Classical plant (class III) peroxidase subfamily. Heme b serves as cofactor. Ca(2+) is required as a cofactor.

It is found in the secreted. The catalysed reaction is 2 a phenolic donor + H2O2 = 2 a phenolic radical donor + 2 H2O. In terms of biological role, removal of H(2)O(2), oxidation of toxic reductants, biosynthesis and degradation of lignin, suberization, auxin catabolism, response to environmental stresses such as wounding, pathogen attack and oxidative stress. These functions might be dependent on each isozyme/isoform in each plant tissue. The sequence is that of Peroxidase 40 (PER40) from Arabidopsis thaliana (Mouse-ear cress).